The sequence spans 125 residues: Fluoride-specific ion channel FluC (125 aa).

4 helical membrane-spanning segments follow: residues 4-24, 32-52, 68-88, and 100-120; these read ILLVGAGGALGSVLRYLVGLW, AFPWGTLFVNVTGSFLIGFLA, FLITGVLGGYTTFSAFSLDAI, and LAYIVASVGLSMLAVFAGLAL. 2 residues coordinate Na(+): Gly75 and Thr78.

Belongs to the fluoride channel Fluc/FEX (TC 1.A.43) family.

Its subcellular location is the cell inner membrane. It catalyses the reaction fluoride(in) = fluoride(out). With respect to regulation, na(+) is not transported, but it plays an essential structural role and its presence is essential for fluoride channel function. Fluoride-specific ion channel. Important for reducing fluoride concentration in the cell, thus reducing its toxicity. The chain is Fluoride-specific ion channel FluC from Rhizobium meliloti (strain 1021) (Ensifer meliloti).